Here is a 193-residue protein sequence, read N- to C-terminus: NADH-quinone oxidoreductase subunit B (193 aa).

The interval 1 to 25 is disordered; it reads MGLNDSSGTLVAPKPKGIIDPNTGR. The [4Fe-4S] cluster site is built by cysteine 72, cysteine 73, cysteine 137, and cysteine 167.

This sequence belongs to the complex I 20 kDa subunit family. As to quaternary structure, NDH-1 is composed of 14 different subunits. Subunits NuoB, C, D, E, F, and G constitute the peripheral sector of the complex. [4Fe-4S] cluster is required as a cofactor.

The protein resides in the cell inner membrane. The catalysed reaction is a quinone + NADH + 5 H(+)(in) = a quinol + NAD(+) + 4 H(+)(out). Its function is as follows. NDH-1 shuttles electrons from NADH, via FMN and iron-sulfur (Fe-S) centers, to quinones in the respiratory chain. Couples the redox reaction to proton translocation (for every two electrons transferred, four hydrogen ions are translocated across the cytoplasmic membrane), and thus conserves the redox energy in a proton gradient. The sequence is that of NADH-quinone oxidoreductase subunit B from Mesorhizobium japonicum (strain LMG 29417 / CECT 9101 / MAFF 303099) (Mesorhizobium loti (strain MAFF 303099)).